The sequence spans 348 residues: D-lactate dehydrogenase kk1H (348 aa).

Residues 158–159, Asp-178, 208–209, 235–237, and Asp-261 each bind NAD(+); these read RI, CP, and TSR. Residue Arg-237 is part of the active site. Residue Glu-266 is part of the active site. His-298 serves as the catalytic Proton donor.

It belongs to the D-isomer specific 2-hydroxyacid dehydrogenase family.

It functions in the pathway secondary metabolite biosynthesis. In terms of biological role, D-lactate dehydrogenase; part of the gene cluster that mediates the biosynthesis of KK-1, a novel cyclic depsipeptide with 10 residues which is a promising active compound with high activity against many plant pathogens, especially Botrytis cinerea. Within the pathway, kk1H catalyzes in the synthesis of D-lactic acid from pyruvic acid, which is recognized by the A domain of the first kk1B module. The nonribosomal peptide synthetase (NRPS) kk1B catalyzes the elongation and cyclization of the decapeptide chain composed of 1 D-lactic acid residue (D-Lac), 1 pipecolic acid residue (Pip), 1 aspartic acid residue (Asp), 1 isoleucine residue (Ile), 1 glycine residue (Gly), 1 tyrosine residue (Tyr) and 4 valine residues (Val). The Asp, Ile and 3 Val residues are N-methylated by the 5 methyltransferase domains from the NRPS (found in modules 3, 5, 6, 7 and 9), whereas the Tyr residue is O-methylated by the cluster encoded O-methyltransferase kk1A. The thioesterase kk1J is likely to be involved in the corrective mechanism of peptide chain synthesis. The D-lactate dehydrogenase kk1H is involved in the synthesis of D-lactic acid from pyruvic acid, which is recognized by the A domain of the first kk1B module. The pyrroline-5-carboxylate reductase kk1I is involved in the synthesis of the L-pipecolic acid residue of KK-1 from delta-1-pyrroline-5-carboxylate (P5C), a metabolic intermediate of lysine. It still is unclear how kk1C and kk1D are involved in the production of KK-1. The protein is D-lactate dehydrogenase kk1H of Curvularia clavata.